The sequence spans 344 residues: Heat-inducible transcription repressor HrcA (344 aa).

This sequence belongs to the HrcA family.

Functionally, negative regulator of class I heat shock genes (grpE-dnaK-dnaJ and groELS operons). Prevents heat-shock induction of these operons. The polypeptide is Heat-inducible transcription repressor HrcA (Streptococcus pneumoniae serotype 19F (strain G54)).